Reading from the N-terminus, the 155-residue chain is Small ribosomal subunit protein uS7c (155 aa).

This sequence belongs to the universal ribosomal protein uS7 family. As to quaternary structure, part of the 30S ribosomal subunit.

The protein resides in the plastid. It is found in the chloroplast. In terms of biological role, one of the primary rRNA binding proteins, it binds directly to 16S rRNA where it nucleates assembly of the head domain of the 30S subunit. The protein is Small ribosomal subunit protein uS7c (rps7) of Hydrastis canadensis (Goldenseal).